The sequence spans 488 residues: Cruciferin (488 aa).

Positions 1–23 are cleaved as a signal peptide; that stretch reads MARLSSLLSFSLALLTFLHGSTA. Disulfide bonds link cysteine 30-cysteine 63 and cysteine 105-cysteine 305. Cupin type-1 domains are found at residues 35 to 262 and 311 to 460; these read LNAL…RTAQ and DNLD…EEAR. The disordered stretch occupies residues 116 to 163; it reads QPSGGSPFGEGQGQGQQGQGQGHQGQGQGQQGQQGQQGQQSQGQGFRD. Over residues 121–147 the composition is skewed to gly residues; it reads SPFGEGQGQGQQGQGQGHQGQGQGQQG. Low complexity predominate over residues 148 to 160; that stretch reads QQGQQGQQSQGQG.

This sequence belongs to the 11S seed storage protein (globulins) family. As to quaternary structure, hexamer; each subunit is composed of an acidic and a basic chain derived from a single precursor and linked by a disulfide bond.

It is found in the rough endoplasmic reticulum. Its function is as follows. This is a seed storage protein. The polypeptide is Cruciferin (CRUA) (Brassica napus (Rape)).